Reading from the N-terminus, the 166-residue chain is MKYTSYILAFQLCVVLGSLGCYCQDPYVKEAENLKKYFNAGDSDVADNGTLFLDILRTWREEGDRKIMQSQIISFYFKLFKNFKDNQSIQKSMETIKEDMNVKFFNSNKRKQDDFERLTNYSVNDLNVQRKAIHELIQVMAELSPAPKIGKRRRSQTLFRGRRASQ.

The signal sequence occupies residues 1–23 (MKYTSYILAFQLCVVLGSLGCYC). Residue Q24 is modified to Pyrrolidone carboxylic acid. N-linked (GlcNAc...) asparagine glycosylation is found at N48, N86, and N120.

This sequence belongs to the type II (or gamma) interferon family. In terms of assembly, homodimer. Interacts with IFNGR1 (via extracellular domain); this interaction promotes IFNGR1 dimerization. Released primarily from activated T lymphocytes.

Its subcellular location is the secreted. Functionally, type II interferon produced by immune cells such as T-cells and NK cells that plays crucial roles in antimicrobial, antiviral, and antitumor responses by activating effector immune cells and enhancing antigen presentation. Primarily signals through the JAK-STAT pathway after interaction with its receptor IFNGR1 to affect gene regulation. Upon IFNG binding, IFNGR1 intracellular domain opens out to allow association of downstream signaling components JAK2, JAK1 and STAT1, leading to STAT1 activation, nuclear translocation and transcription of IFNG-regulated genes. Many of the induced genes are transcription factors such as IRF1 that are able to further drive regulation of a next wave of transcription. Plays a role in class I antigen presentation pathway by inducing a replacement of catalytic proteasome subunits with immunoproteasome subunits. In turn, increases the quantity, quality, and repertoire of peptides for class I MHC loading. Increases the efficiency of peptide generation also by inducing the expression of activator PA28 that associates with the proteasome and alters its proteolytic cleavage preference. Up-regulates as well MHC II complexes on the cell surface by promoting expression of several key molecules such as cathepsins B/CTSB, H/CTSH, and L/CTSL. Participates in the regulation of hematopoietic stem cells during development and under homeostatic conditions by affecting their development, quiescence, and differentiation. The sequence is that of Interferon gamma (IFNG) from Callithrix jacchus (White-tufted-ear marmoset).